We begin with the raw amino-acid sequence, 425 residues long: SWI5-dependent HO expression protein 3 (425 aa).

The disordered stretch occupies residues 24–45 (NLESSPTKDRNTSSQNASSSRV). The segment covering 35–45 (TSSQNASSSRV) has biased composition (polar residues). Residues 68-197 (QNLLSKLELA…LELSNQNLNY (130 aa)) are a coiled coil. Residues 322–425 (RKTPNTNDSS…NSMVVHGAQS (104 aa)) are disordered. A compositionally biased stretch (low complexity) spans 326–338 (NTNDSSSNGNSSN). Residue S343 is modified to Phosphoserine. 2 stretches are compositionally biased toward polar residues: residues 345–358 (YTAS…SIPK) and 382–397 (KTNV…SPTI). Position 394 is a phosphoserine (S394).

It belongs to the SHE3 family. In terms of assembly, interacts with SHE2 and MYO4.

The protein resides in the endoplasmic reticulum membrane. Functionally, RNA-binding protein that binds specific mRNAs including the ASH1 mRNA, coding for a repressor of the HO endonuclease. Part of the mRNA localization machinery that restricts accumulation of certain proteins to the bud and in the daughter cell. Required for the delivery of cortical endoplasmic reticulum into the emerging bud. This is SWI5-dependent HO expression protein 3 (SHE3) from Saccharomyces cerevisiae (strain ATCC 204508 / S288c) (Baker's yeast).